Reading from the N-terminus, the 98-residue chain is UPF0235 protein azo3464 (98 aa).

The protein belongs to the UPF0235 family.

This Azoarcus sp. (strain BH72) protein is UPF0235 protein azo3464.